The chain runs to 163 residues: Lipoprotein signal peptidase (163 aa).

The next 4 helical transmembrane spans lie at 9–29, 42–62, 67–87, and 93–113; these read AWPW…SKYL, ILPF…SFLG, WQII…ILWL, and SEIM…GNFI. Active-site residues include Asp123 and Asp141. Residues 137-157 form a helical membrane-spanning segment; it reads FNVADSAICVGVFLLIVYMLL.

Belongs to the peptidase A8 family.

The protein localises to the cell inner membrane. It carries out the reaction Release of signal peptides from bacterial membrane prolipoproteins. Hydrolyzes -Xaa-Yaa-Zaa-|-(S,diacylglyceryl)Cys-, in which Xaa is hydrophobic (preferably Leu), and Yaa (Ala or Ser) and Zaa (Gly or Ala) have small, neutral side chains.. It participates in protein modification; lipoprotein biosynthesis (signal peptide cleavage). Its function is as follows. This protein specifically catalyzes the removal of signal peptides from prolipoproteins. In Coxiella burnetii (strain Dugway 5J108-111), this protein is Lipoprotein signal peptidase.